The sequence spans 619 residues: Manganese lipoxygenase (619 aa).

Residues 1-16 form the signal peptide; the sequence is MRVLVWIAGLAPLAVA. 6 N-linked (GlcNAc...) asparagine glycosylation sites follow: asparagine 32, asparagine 42, asparagine 62, asparagine 86, asparagine 164, and asparagine 229. Residues 55 to 619 form the Lipoxygenase domain; it reads TLPCEDGNST…PGNIPFYLSV (565 aa). Residues histidine 298, histidine 303, histidine 483, and asparagine 487 each coordinate Mn(2+). Residues asparagine 515 and asparagine 549 are each glycosylated (N-linked (GlcNAc...) asparagine). A Mn(2+)-binding site is contributed by valine 619.

This sequence belongs to the lipoxygenase family. Manganese lipoxygenase subfamily. Mn(2+) serves as cofactor.

The protein resides in the secreted. It catalyses the reaction (9Z,12Z)-octadecadienoate + O2 = (9S)-hydroperoxy-(10E,12Z)-octadecadienoate. The enzyme catalyses (9Z,12Z)-octadecadienoate + O2 = (11S)-hydroperoxy-(9Z,12Z)-octadecadienoate. It carries out the reaction (9Z,12Z)-octadecadienoate + O2 = (13R)-hydroperoxy-(9Z,11E)-octadecadienoate. The catalysed reaction is (9Z,12Z,15Z)-octadecatrienoate + O2 = (9S)-hydroperoxy-(10E,12Z,15Z)-octadecatrienoate. It catalyses the reaction (9Z,12Z,15Z)-octadecatrienoate + O2 = (11R)-hydroperoxy-(9Z,12Z,15Z)-octadecatrienoate. The enzyme catalyses (9Z,12Z,15Z)-octadecatrienoate + O2 = (13R)-hydroperoxy-(9Z,11E,15Z)-octadecatrienoate. It carries out the reaction (9S)-hydroperoxy-(10E,12Z,15Z)-octadecatrienoate + O2 = (9S,16S)-dihydroperoxy-(10E,12Z,14E)-octadecatrienoate. Lipoxygenase that metabolizes linoleic and alpha-linolenic acids to 9S-, 11- and 13R-hydroperoxy fatty acids. At the end of lipoxygenation, the intermediate product 11S-HPODE from linoleic acid is then transformed into 9S-HPODE and 13R-HPODE as the final products. The intermediate product 11R-HPOTrE from alpha-linolenic acid is transformed into 9S-HPOTrE and 13R-HPOTrE as the final products. 9S-HPOTrE is further oxidized by the enzyme to 9S,16S-DiHPOTrE as the end product. This chain is Manganese lipoxygenase, found in Pyricularia oryzae (strain 70-15 / ATCC MYA-4617 / FGSC 8958) (Rice blast fungus).